The following is an 827-amino-acid chain: Centrosomal protein of 95 kDa (827 aa).

Disordered regions lie at residues 115–145 (ISES…ERTE), 183–249 (GDTA…MVPS), 308–372 (FLTS…MSEK), 388–476 (LGDR…DSCH), and 489–558 (ELRK…KASP). Positions 123–145 (SETEQYSKDSHGEEAGEDLERTE) are enriched in basic and acidic residues. Residues 187-199 (HTFSQRSNGAQNS) are compositionally biased toward polar residues. 2 stretches are compositionally biased toward basic and acidic residues: residues 327 to 343 (EATR…DENR) and 360 to 372 (PLTE…MSEK). Phosphoserine is present on residues S447, S449, and S451. 2 coiled-coil regions span residues 584-633 (LTKM…VKKE) and 701-795 (LQIQ…DDDA).

It localises to the cytoplasm. The protein localises to the cytoskeleton. The protein resides in the microtubule organizing center. It is found in the centrosome. Its subcellular location is the spindle pole. The chain is Centrosomal protein of 95 kDa (Cep95) from Mus musculus (Mouse).